A 247-amino-acid chain; its full sequence is Probable dihydroorotate dehydrogenase B (NAD(+)), electron transfer subunit (247 aa).

The FAD-binding FR-type domain occupies 1–87 (MLRRVMIKET…RGPYGNGFKS (87 aa)). 4 residues coordinate [2Fe-2S] cluster: Cys-200, Cys-205, Cys-208, and Cys-216.

This sequence belongs to the PyrK family. Heterotetramer of 2 PyrK and 2 PyrD type B subunits. [2Fe-2S] cluster serves as cofactor. The cofactor is FAD.

Its pathway is pyrimidine metabolism; UMP biosynthesis via de novo pathway; orotate from (S)-dihydroorotate (NAD(+) route): step 1/1. Responsible for channeling the electrons from the oxidation of dihydroorotate from the FMN redox center in the PyrD type B subunit to the ultimate electron acceptor NAD(+). This is Probable dihydroorotate dehydrogenase B (NAD(+)), electron transfer subunit from Pyrococcus abyssi (strain GE5 / Orsay).